Reading from the N-terminus, the 451-residue chain is Mannan endo-1,6-alpha-mannosidase DFG5 (451 aa).

The first 21 residues, 1-21 (MVSLQQLTISILLLFTASVQS), serve as a signal peptide directing secretion. Asn-86, Asn-111, Asn-135, Asn-203, Asn-243, Asn-268, and Asn-402 each carry an N-linked (GlcNAc...) asparagine glycan. Ala-429 is lipidated: GPI-anchor amidated alanine. A propeptide spans 430-451 (GAGVLTAIVLAVILGGAIWMIF) (removed in mature form).

This sequence belongs to the glycosyl hydrolase 76 family. In terms of processing, the GPI-anchor is attached to the protein in the endoplasmic reticulum and serves to target the protein to the cell surface. There, the glucosamine-inositol phospholipid moiety is cleaved off and the GPI-modified mannoprotein is covalently attached via its lipidless GPI glycan remnant to the 1,6-beta-glucan of the outer cell wall layer. Post-translationally, N-mannosylated.

The protein resides in the secreted. It localises to the cell wall. The protein localises to the cell membrane. It catalyses the reaction Random hydrolysis of (1-&gt;6)-alpha-D-mannosidic linkages in unbranched (1-&gt;6)-mannans.. In terms of biological role, required for normal synthesis of the cell wall and alkaline pH-induced hypha formation. In Candida albicans (strain SC5314 / ATCC MYA-2876) (Yeast), this protein is Mannan endo-1,6-alpha-mannosidase DFG5 (DFG5).